The sequence spans 279 residues: NADPH-dependent 7-cyano-7-deazaguanine reductase (279 aa).

A substrate-binding site is contributed by 86–88 (VES). Residue 88-89 (SK) coordinates NADPH. Cysteine 187 serves as the catalytic Thioimide intermediate. Aspartate 194 (proton donor) is an active-site residue. Residue 226–227 (HE) coordinates substrate. Residue 255–256 (RG) participates in NADPH binding.

This sequence belongs to the GTP cyclohydrolase I family. QueF type 2 subfamily. As to quaternary structure, homodimer.

The protein localises to the cytoplasm. The catalysed reaction is 7-aminomethyl-7-carbaguanine + 2 NADP(+) = 7-cyano-7-deazaguanine + 2 NADPH + 3 H(+). Its pathway is tRNA modification; tRNA-queuosine biosynthesis. Functionally, catalyzes the NADPH-dependent reduction of 7-cyano-7-deazaguanine (preQ0) to 7-aminomethyl-7-deazaguanine (preQ1). This is NADPH-dependent 7-cyano-7-deazaguanine reductase from Actinobacillus succinogenes (strain ATCC 55618 / DSM 22257 / CCUG 43843 / 130Z).